The primary structure comprises 166 residues: Putative glycine-rich cell wall structural protein 1 (166 aa).

Residues 1–23 (MARKVIALAFLLLLTISLSKSNA) form the signal peptide. R2; Tyr-rich repeat units follow at residues 56–62 (GYGYNYG) and 93–99 (GYGYGYG). The interval 105-125 (AQGQGSGGGGGGGGGGGGGGS) is disordered. Residues 132-138 (GYGYGYG) form an R2; Tyr-rich repeat. The segment covering 144–160 (GGGGGGDGGGGGGGGSA) has biased composition (gly residues). Positions 144–166 (GGGGGGDGGGGGGGGSAYVGRHE) are disordered.

The protein localises to the secreted. It localises to the cell wall. Functionally, responsible for plasticity of the cell wall. This is Putative glycine-rich cell wall structural protein 1 (GRP-1) from Oryza sativa subsp. japonica (Rice).